The primary structure comprises 265 residues: Phosphate import ATP-binding protein PstB 1 (265 aa).

The 241-residue stretch at Leu20–Ile260 folds into the ABC transporter domain. Residue Gly53 to Ser60 coordinates ATP.

This sequence belongs to the ABC transporter superfamily. Phosphate importer (TC 3.A.1.7) family. The complex is composed of two ATP-binding proteins (PstB), two transmembrane proteins (PstC and PstA) and a solute-binding protein (PstS).

It localises to the cell membrane. It catalyses the reaction phosphate(out) + ATP + H2O = ADP + 2 phosphate(in) + H(+). Part of the ABC transporter complex PstSACB involved in phosphate import. Responsible for energy coupling to the transport system. This Lactobacillus acidophilus (strain ATCC 700396 / NCK56 / N2 / NCFM) protein is Phosphate import ATP-binding protein PstB 1.